We begin with the raw amino-acid sequence, 368 residues long: Quinolinate synthase (368 aa).

Residues H46 and S63 each coordinate iminosuccinate. C110 lines the [4Fe-4S] cluster pocket. Iminosuccinate-binding positions include 141–143 (YVN) and S162. C230 provides a ligand contact to [4Fe-4S] cluster. Iminosuccinate is bound by residues 256-258 (HPE) and T273. C320 serves as a coordination point for [4Fe-4S] cluster.

Belongs to the quinolinate synthase family. Type 3 subfamily. [4Fe-4S] cluster serves as cofactor.

It is found in the cytoplasm. The enzyme catalyses iminosuccinate + dihydroxyacetone phosphate = quinolinate + phosphate + 2 H2O + H(+). It functions in the pathway cofactor biosynthesis; NAD(+) biosynthesis; quinolinate from iminoaspartate: step 1/1. In terms of biological role, catalyzes the condensation of iminoaspartate with dihydroxyacetone phosphate to form quinolinate. In Bacillus thuringiensis subsp. konkukian (strain 97-27), this protein is Quinolinate synthase.